The chain runs to 303 residues: Agmatinase (303 aa).

Residues H126, D149, H151, D153, D230, and D232 each contribute to the Mn(2+) site.

The protein belongs to the arginase family. Agmatinase subfamily. The cofactor is Mn(2+).

The catalysed reaction is agmatine + H2O = urea + putrescine. Its function is as follows. Catalyzes the formation of putrescine from agmatine. The protein is Agmatinase (speB) of Blochmanniella floridana.